Consider the following 75-residue polypeptide: Probable [Fe-S]-dependent transcriptional repressor (75 aa).

Iron-sulfur cluster contacts are provided by C55, C60, C63, and C72.

Belongs to the FeoC family.

In terms of biological role, may function as a transcriptional regulator that controls feoABC expression. The polypeptide is Probable [Fe-S]-dependent transcriptional repressor (Serratia marcescens).